The sequence spans 412 residues: Multidrug resistance protein MdtG (412 aa).

The next 11 helical transmembrane spans lie at 19-39 (LGCF…PLYV), 56-76 (LVFS…GGLA), 90-110 (LGMS…QFLL), 113-133 (ALLG…ATQI), 144-164 (TLST…GFLA), 171-191 (TVFF…LFLI), 222-242 (LFVT…ILTL), 254-274 (IAFI…MSAP), 288-308 (ILIV…FVQT), 317-337 (FLLG…LVYN), and 376-396 (AVFL…TLSL).

The protein belongs to the major facilitator superfamily. DHA1 family. MdtG (TC 2.A.1.2.20) subfamily.

It localises to the cell inner membrane. The chain is Multidrug resistance protein MdtG from Klebsiella pneumoniae (strain 342).